Consider the following 271-residue polypeptide: Aspartate/glutamate leucyltransferase (271 aa).

It belongs to the R-transferase family. Bpt subfamily.

It is found in the cytoplasm. It catalyses the reaction N-terminal L-glutamyl-[protein] + L-leucyl-tRNA(Leu) = N-terminal L-leucyl-L-glutamyl-[protein] + tRNA(Leu) + H(+). The catalysed reaction is N-terminal L-aspartyl-[protein] + L-leucyl-tRNA(Leu) = N-terminal L-leucyl-L-aspartyl-[protein] + tRNA(Leu) + H(+). Functions in the N-end rule pathway of protein degradation where it conjugates Leu from its aminoacyl-tRNA to the N-termini of proteins containing an N-terminal aspartate or glutamate. The sequence is that of Aspartate/glutamate leucyltransferase from Acinetobacter baylyi (strain ATCC 33305 / BD413 / ADP1).